The sequence spans 296 residues: uncharacterized protein (296 aa).

A run of 6 helical transmembrane segments spans residues 10-29 (FSTL…FSLL), 36-58 (YIVL…YYIL), 112-131 (FFAL…MFVT), 188-210 (ILIF…LYLR), 241-260 (MMYG…SAYF), and 273-295 (MYIS…VTYI).

The protein resides in the cell membrane. This is an uncharacterized protein from Clostridium acetobutylicum (strain ATCC 824 / DSM 792 / JCM 1419 / IAM 19013 / LMG 5710 / NBRC 13948 / NRRL B-527 / VKM B-1787 / 2291 / W).